The primary structure comprises 150 residues: UPF0756 membrane protein Dd703_1075 (150 aa).

Helical transmembrane passes span 8–28, 51–71, 81–101, and 114–134; these read LLIL…TITL, YGLS…IASG, AFLN…SWLG, and VVAG…GVPV.

The protein belongs to the UPF0756 family.

Its subcellular location is the cell membrane. In Musicola paradisiaca (strain Ech703) (Dickeya paradisiaca), this protein is UPF0756 membrane protein Dd703_1075.